A 708-amino-acid polypeptide reads, in one-letter code: Lactotransferrin (708 aa).

The signal sequence occupies residues 1-19; the sequence is MKLFFPALLSLGALGLCLA. 2 Transferrin-like domains span residues 25–352 and 364–693; these read VRWC…GLRE and VVWC…KLRR. 2 disulfide bridges follow: C28/C64 and C38/C55. The tract at residues 44–51 is interaction with E.coli ompC; the sequence is RMKKVRGP. D79 is a Fe(3+) binding site. K92 is a catalytic residue. Residue Y111 coordinates Fe(3+). 5 disulfides stabilise this stretch: C134–C217, C176–C192, C179–C202, C189–C200, and C250–C264. 4 residues coordinate hydrogencarbonate: T136, R140, A142, and G143. Y211 serves as a coordination point for Fe(3+). N252 carries N-linked (GlcNAc...) asparagine glycosylation. H272 lines the Fe(3+) pocket. S278 (nucleophile) is an active-site residue. Cystine bridges form between C367–C399 and C377–C390. N385 carries an N-linked (GlcNAc...) asparagine glycan. Fe(3+) is bound by residues D414 and Y452. Disulfide bonds link C424-C703, C444-C666, C476-C551, C500-C694, C510-C524, C521-C534, C592-C606, and C644-C649. 4 residues coordinate hydrogencarbonate: T478, R482, A484, and G485. N537 is a glycosylation site (N-linked (GlcNAc...) asparagine). Residue Y545 coordinates Fe(3+). N594 carries an N-linked (GlcNAc...) asparagine glycan. H614 lines the Fe(3+) pocket.

The protein belongs to the transferrin family. Monomer. Found in a complex with LTF, CLU, EPPIN and SEMG1. Interacts with E.coli outer membrane protein C (OmpC). Found in a complex with MPO and LTF; interacts directly with CP, allows Fe(3+) incorporation into LTF and activation of CP ferroxidase activity. Post-translationally, poly-N-acetyllactosaminic carbohydrate moiety seems to be needed for TLR4 activation.

It is found in the secreted. Its subcellular location is the cytoplasmic granule. Its function is as follows. Transferrins are iron binding transport proteins which can bind two Fe(3+) ions in association with the binding of an anion, usually bicarbonate. In terms of biological role, major iron-binding and multifunctional protein found in exocrine fluids such as breast milk and mucosal secretions. Has antimicrobial activity, which depends on the extracellular cation concentration. Antimicrobial properties include bacteriostasis, which is related to its ability to sequester free iron and thus inhibit microbial growth, as well as direct bactericidal properties leading to the release of lipopolysaccharides from the bacterial outer membrane. Can also prevent bacterial biofilm development in P.aeruginosa infection. Has weak antifungal activity against C.albicans. Has anabolic, differentiating and anti-apoptotic effects on osteoblasts and can also inhibit osteoclastogenesis, possibly playing a role in the regulation of bone growth. Promotes binding of species C adenoviruses to epithelial cells, promoting adenovirus infection. Can inhibit papillomavirus infections. Stimulates the TLR4 signaling pathway leading to NF-kappa-B activation and subsequent pro-inflammatory cytokine production while also interfering with the lipopolysaccharide (LPS)-stimulated TLR4 signaling. Inhibits neutrophil granulocyte migration to sites of apoptosis, when secreted by apoptotic cells. Stimulates VEGFA-mediated endothelial cell migration and proliferation. Binds heparin, chondroitin sulfate and possibly other glycosaminoglycans (GAGs). Also binds specifically to pneumococcal surface protein A (PspA), the lipid A portion of bacterial lipopolysaccharide (LPS), lysozyme and DNA. Functionally, lactoferricin binds to the bacterial surface and is crucial for the bactericidal functions. Has some antiviral activity against papillomavirus infection. N-terminal region shows strong antifungal activity against C.albicans. Contains two BBXB heparin-binding consensus sequences that appear to form the predominate functional GAG-binding site. The lactotransferrin transferrin-like domain 1 functions as a serine protease of the peptidase S60 family that cuts arginine rich regions. This function contributes to the antimicrobial activity. Shows a preferential cleavage at -Arg-Ser-Arg-Arg-|- and -Arg-Arg-Ser-Arg-|-, and of Z-Phe-Arg-|-aminomethylcoumarin sites. The protein is Lactotransferrin (LTF) of Camelus dromedarius (Dromedary).